The chain runs to 266 residues: Large ribosomal subunit protein eL8 (266 aa).

Glycyl lysine isopeptide (Lys-Gly) (interchain with G-Cter in SUMO2) cross-links involve residues Lys-11, Lys-20, and Lys-21. The residue at position 34 (Lys-34) is an N6-acetyllysine. Residue Lys-48 forms a Glycyl lysine isopeptide (Lys-Gly) (interchain with G-Cter in SUMO2) linkage. At Lys-97 the chain carries N6-acetyllysine; alternate. Lys-97 participates in a covalent cross-link: Glycyl lysine isopeptide (Lys-Gly) (interchain with G-Cter in SUMO2); alternate. Lys-125 participates in a covalent cross-link: Glycyl lysine isopeptide (Lys-Gly) (interchain with G-Cter in SUMO2). Residue Lys-217 is modified to N6-acetyllysine. Residue Lys-245 forms a Glycyl lysine isopeptide (Lys-Gly) (interchain with G-Cter in SUMO2) linkage.

It belongs to the eukaryotic ribosomal protein eL8 family. In terms of assembly, component of the large ribosomal subunit. Interacts with CRY1. Interacts with DICER1, AGO2, TARBP2, MOV10 and EIF6; they form a large RNA-induced silencing complex (RISC).

It localises to the cytoplasm. Functionally, component of the large ribosomal subunit. The ribosome is a large ribonucleoprotein complex responsible for the synthesis of proteins in the cell. The sequence is that of Large ribosomal subunit protein eL8 (Rpl7a) from Mus musculus (Mouse).